The following is a 240-amino-acid chain: Phosphoribosylaminoimidazole-succinocarboxamide synthase (240 aa).

The protein belongs to the SAICAR synthetase family.

It carries out the reaction 5-amino-1-(5-phospho-D-ribosyl)imidazole-4-carboxylate + L-aspartate + ATP = (2S)-2-[5-amino-1-(5-phospho-beta-D-ribosyl)imidazole-4-carboxamido]succinate + ADP + phosphate + 2 H(+). Its pathway is purine metabolism; IMP biosynthesis via de novo pathway; 5-amino-1-(5-phospho-D-ribosyl)imidazole-4-carboxamide from 5-amino-1-(5-phospho-D-ribosyl)imidazole-4-carboxylate: step 1/2. This is Phosphoribosylaminoimidazole-succinocarboxamide synthase from Wolbachia sp. subsp. Drosophila simulans (strain wRi).